The primary structure comprises 310 residues: Homoserine kinase (310 aa).

91–101 (PIGSGLGSSAC) provides a ligand contact to ATP.

Belongs to the GHMP kinase family. Homoserine kinase subfamily.

The protein resides in the cytoplasm. It catalyses the reaction L-homoserine + ATP = O-phospho-L-homoserine + ADP + H(+). It participates in amino-acid biosynthesis; L-threonine biosynthesis; L-threonine from L-aspartate: step 4/5. Catalyzes the ATP-dependent phosphorylation of L-homoserine to L-homoserine phosphate. This Escherichia coli (strain SE11) protein is Homoserine kinase.